Reading from the N-terminus, the 67-residue chain is Phycobilisome 7.8 kDa linker polypeptide, allophycocyanin-associated, core (67 aa).

Residues 1–56 (MRMFRITACLPSPSKIRTQRELQNTFFTKLVPYDAWFREQQRIQKLGGKIIKVELA) form the CpcD-like domain.

It belongs to the phycobilisome linker protein family.

It localises to the cellular thylakoid membrane. Its function is as follows. Rod linker protein, associated with allophycocyanin. Linker polypeptides determine the state of aggregation and the location of the disk-shaped phycobiliprotein units within the phycobilisome and modulate their spectroscopic properties in order to mediate a directed and optimal energy transfer. The polypeptide is Phycobilisome 7.8 kDa linker polypeptide, allophycocyanin-associated, core (apcC) (Synechococcus sp. (strain ATCC 27144 / PCC 6301 / SAUG 1402/1) (Anacystis nidulans)).